The primary structure comprises 246 residues: Ribonuclease PH (246 aa).

Phosphate contacts are provided by residues Arg91 and 129-131; that span reads GTR.

Belongs to the RNase PH family. Homohexameric ring arranged as a trimer of dimers.

It catalyses the reaction tRNA(n+1) + phosphate = tRNA(n) + a ribonucleoside 5'-diphosphate. Its function is as follows. Phosphorolytic 3'-5' exoribonuclease that plays an important role in tRNA 3'-end maturation. Removes nucleotide residues following the 3'-CCA terminus of tRNAs; can also add nucleotides to the ends of RNA molecules by using nucleoside diphosphates as substrates, but this may not be physiologically important. Probably plays a role in initiation of 16S rRNA degradation (leading to ribosome degradation) during starvation. This chain is Ribonuclease PH, found in Paraburkholderia phymatum (strain DSM 17167 / CIP 108236 / LMG 21445 / STM815) (Burkholderia phymatum).